An 801-amino-acid polypeptide reads, in one-letter code: LPS-assembly protein LptD (801 aa).

The first 23 residues, 1 to 23, serve as a signal peptide directing secretion; it reads MARLFSLKPLVLALGFCFGTHCA.

This sequence belongs to the LptD family. Component of the lipopolysaccharide transport and assembly complex. Interacts with LptE and LptA.

It localises to the cell outer membrane. Its function is as follows. Together with LptE, is involved in the assembly of lipopolysaccharide (LPS) at the surface of the outer membrane. The sequence is that of LPS-assembly protein LptD from Neisseria gonorrhoeae (strain ATCC 700825 / FA 1090).